The sequence spans 242 residues: Probable transcriptional regulatory protein BamMC406_2210 (242 aa).

It belongs to the TACO1 family.

It is found in the cytoplasm. The sequence is that of Probable transcriptional regulatory protein BamMC406_2210 from Burkholderia ambifaria (strain MC40-6).